A 652-amino-acid polypeptide reads, in one-letter code: Zinc finger protein 503 (652 aa).

Residues 1 to 11 (MSTAPSLSALR) are compositionally biased toward polar residues. The tract at residues 1 to 72 (MSTAPSLSAL…HAVPPSDPLR (72 aa)) is disordered. Residues 16–32 (SGGGGGGGGGGGSGGGS) show a composition bias toward gly residues. Phosphoserine is present on serine 107. Disordered stretches follow at residues 126–283 (SQIG…GVPA) and 296–338 (INVD…SSVL). Positions 135–144 (PSSKLSSVAS) are enriched in low complexity. Composition is skewed to gly residues over residues 145-157 (NGGG…NGAG) and 194-209 (GGGG…GGGV). An N6-acetyllysine modification is found at lysine 213. Residues 221 to 230 (ATCQPFTPRT) are compositionally biased toward polar residues. Positions 231-244 (GSPSSSASACSPGG) are enriched in low complexity. A phosphoserine mark is found at serine 235 and serine 241. Residues 254 to 263 (EGKDDKKDPE) are compositionally biased toward basic and acidic residues. Residues 264–283 (AGGGGSSKGSGGASADGVPA) show a composition bias toward gly residues. The span at 314–336 (GSDCGGSSSSSSGSGPSAPTSSS) shows a compositional bias: low complexity. The C2H2-type zinc finger occupies 520 to 548 (HICNWVSANGPCDKRFATSEELLSHLRTH). Arginine 642 is modified (omega-N-methylarginine).

The protein belongs to the Elbow/Noc family.

The protein localises to the nucleus. Functionally, may function as a transcriptional repressor. The protein is Zinc finger protein 503 (Znf503) of Mus musculus (Mouse).